The following is a 540-amino-acid chain: NADH-ubiquinone oxidoreductase chain 4 (540 aa).

Helical transmembrane passes span 2 to 22, 35 to 55, 89 to 109, 118 to 138, 140 to 160, 172 to 192, 218 to 238, 248 to 268, 282 to 302, 310 to 330, 338 to 358, 376 to 396, 415 to 435, and 501 to 521; these read TIIAISIMNVVIGIAILGVIL, IFILGVQGILIVLSGIMLIGC, ISAIFIFLTIILILSCNLISI, QKFQIMLLLTEILIINFFAAT, LVQLYIVYEATLIPMVIMIGV, FQILIYTLIGSIFMLMSIGIL, LIFIGFFIGFAVKIPIAPLHL, PTAGSVLLAGILLKLGGYGYI, YFPIIGGICLISILYTGIATL, IVAYSSISHMNVIVLGLFSGV, IILMIGHGVVSGGLFLCIGVI, VMPIMAILFFLLVLGNIAFPI, IIIAFFSALSMIVTAIYSFWL, and VNIFEFTSISLMVIMMIIIGM.

Belongs to the complex I subunit 4 family.

The protein resides in the mitochondrion membrane. The enzyme catalyses a ubiquinone + NADH + 5 H(+)(in) = a ubiquinol + NAD(+) + 4 H(+)(out). Functionally, core subunit of the mitochondrial membrane respiratory chain NADH dehydrogenase (Complex I) that is believed to belong to the minimal assembly required for catalysis. Complex I functions in the transfer of electrons from NADH to the respiratory chain. The immediate electron acceptor for the enzyme is believed to be ubiquinone. This is NADH-ubiquinone oxidoreductase chain 4 (nad4) from Dictyostelium discoideum (Social amoeba).